The sequence spans 401 residues: Deacetoxyvindoline 4-hydroxylase (401 aa).

Residues 242 to 345 (CAEGLILLGH…SVAVAFGIKT (104 aa)) form the Fe2OG dioxygenase domain. Residues His268, Asp270, and His324 each contribute to the Fe cation site. Residue Arg334 coordinates 2-oxoglutarate.

The protein belongs to the iron/ascorbate-dependent oxidoreductase family. In terms of assembly, monomer. Fe cation is required as a cofactor. The cofactor is L-ascorbate. As to expression, highest levels in leaves, lower levels in stems and fruits. Not expressed in flowers and roots.

It localises to the cytoplasm. The protein localises to the nucleus. It catalyses the reaction deacetoxyvindoline + 2-oxoglutarate + O2 = 4-O-deacetylvindoline + succinate + CO2. Its pathway is alkaloid biosynthesis; vindoline biosynthesis. Functionally, catalyzes the C4-hydroxylation of desacetoxyvindoline. In Catharanthus roseus (Madagascar periwinkle), this protein is Deacetoxyvindoline 4-hydroxylase.